The following is a 317-amino-acid chain: L-lactate dehydrogenase 1 (317 aa).

Residues V17, D38, K43, Y69, and 83–84 contribute to the NAD(+) site; that span reads GA. Substrate is bound by residues Q86 and R92. Residues S105, 122–124, and S147 contribute to the NAD(+) site; that span reads ATN. Residue 124 to 127 coordinates substrate; sequence NPVD. Substrate is bound at residue 152–155; the sequence is DSAR. The Proton acceptor role is filled by H179. The residue at position 223 (Y223) is a Phosphotyrosine. Residue T232 participates in substrate binding.

It belongs to the LDH/MDH superfamily. LDH family. Homotetramer.

It localises to the cytoplasm. The enzyme catalyses (S)-lactate + NAD(+) = pyruvate + NADH + H(+). The protein operates within fermentation; pyruvate fermentation to lactate; (S)-lactate from pyruvate: step 1/1. Functionally, catalyzes the conversion of lactate to pyruvate (Potential). Appears to be the primary factor that allows S.aureus growth during nitrosative stress in both aerobically and anaerobically cultured cells. This Staphylococcus aureus (strain USA300) protein is L-lactate dehydrogenase 1.